We begin with the raw amino-acid sequence, 243 residues long: ATP synthase subunit a (243 aa).

The next 7 membrane-spanning stretches (helical) occupy residues 29-49 (NASL…YIGL), 54-74 (ILPN…VSTI), 89-109 (VFTI…PLGF), 114-134 (HIAV…AIGF), 144-164 (ILLP…IELF), 182-202 (IAGH…NIFL), and 208-228 (AFII…AYIF).

Belongs to the ATPase A chain family. In terms of assembly, F-type ATPases have 2 components, CF(1) - the catalytic core - and CF(0) - the membrane proton channel. CF(1) has five subunits: alpha(3), beta(3), gamma(1), delta(1), epsilon(1). CF(0) has three main subunits: a(1), b(2) and c(9-12). The alpha and beta chains form an alternating ring which encloses part of the gamma chain. CF(1) is attached to CF(0) by a central stalk formed by the gamma and epsilon chains, while a peripheral stalk is formed by the delta and b chains.

Its subcellular location is the cell inner membrane. Functionally, key component of the proton channel; it plays a direct role in the translocation of protons across the membrane. The chain is ATP synthase subunit a from Ehrlichia chaffeensis (strain ATCC CRL-10679 / Arkansas).